Reading from the N-terminus, the 210-residue chain is Large ribosomal subunit protein uL3 (210 aa).

This sequence belongs to the universal ribosomal protein uL3 family. Part of the 50S ribosomal subunit. Forms a cluster with proteins L14 and L19.

Its function is as follows. One of the primary rRNA binding proteins, it binds directly near the 3'-end of the 23S rRNA, where it nucleates assembly of the 50S subunit. The sequence is that of Large ribosomal subunit protein uL3 from Pseudothermotoga lettingae (strain ATCC BAA-301 / DSM 14385 / NBRC 107922 / TMO) (Thermotoga lettingae).